Reading from the N-terminus, the 156-residue chain is Small ribosomal subunit protein uS7 (156 aa).

Belongs to the universal ribosomal protein uS7 family. In terms of assembly, part of the 30S ribosomal subunit. Contacts proteins S9 and S11.

In terms of biological role, one of the primary rRNA binding proteins, it binds directly to 16S rRNA where it nucleates assembly of the head domain of the 30S subunit. Is located at the subunit interface close to the decoding center, probably blocks exit of the E-site tRNA. The protein is Small ribosomal subunit protein uS7 of Brucella melitensis biotype 1 (strain ATCC 23456 / CCUG 17765 / NCTC 10094 / 16M).